The chain runs to 229 residues: Ribonuclease 3 (229 aa).

An RNase III domain is found at 3-125 (VNALQEKLGY…LIGGIFLDSN (123 aa)). A Mg(2+)-binding site is contributed by Glu38. The active site involves Asp42. Mg(2+) contacts are provided by Asn111 and Glu114. Glu114 is an active-site residue. Positions 155–225 (DPKTRLQEYM…AAKVLEALEH (71 aa)) constitute a DRBM domain.

It belongs to the ribonuclease III family. Homodimer. Mg(2+) is required as a cofactor.

It localises to the cytoplasm. It carries out the reaction Endonucleolytic cleavage to 5'-phosphomonoester.. Functionally, digests double-stranded RNA. Involved in the processing of primary rRNA transcript to yield the immediate precursors to the large and small rRNAs (23S and 16S). Processes some mRNAs, and tRNAs when they are encoded in the rRNA operon. Processes pre-crRNA and tracrRNA of type II CRISPR loci if present in the organism. This Blochmanniella pennsylvanica (strain BPEN) protein is Ribonuclease 3.